Here is a 440-residue protein sequence, read N- to C-terminus: Tripartite motif-containing protein 14 (440 aa).

The B box-type zinc-finger motif lies at 17-59 (AYGWRCPEHSERPAELFCRRCGRCVCALCPVLGAHRGHPVGLA). 4 residues coordinate Zn(2+): Cys22, His25, Cys45, and His51. A B30.2/SPRY domain is found at 247–440 (ALLKTSPSPE…EGPISIPRLP (194 aa)).

It belongs to the TRIM/RBCC family. Interacts with MAVS. Interacts with WRNIP1 and PPP6C; these interactions positively regulate the RIG-I signaling pathway. Interacts with CGAS; this interaction stabilizes CGAS and promotes type I interferon production. Interacts with USP14; this interaction mediates the cleavage of 'Lys-48'-linked ubiquitination of CGAS. Interacts with TBK1. Interacts with SPI1. Interacts with KDM4D and USP14. Ubiquitinated. Undergoes 'Lys-63'-linked polyubiquitination; this modification allows IKBKG/NEMO recruitment to MAVS. Undergoes 'Lys-48'-linked polyubiquitination by RNF125; this modification mediates its degradation via the ubiquitin-proteasome pathway. Expressed with high level in spleen, thymus, liver and testis. Expressed with low level in the brain, kidney, and skeletal muscle. Expressed in various differentiation stages of B-lymphocytes.

It localises to the mitochondrion outer membrane. The protein localises to the cytoplasmic vesicle. Its subcellular location is the phagosome. In terms of biological role, plays a role in the innate immune defense against viruses. Facilitates the type I IFN response by interacting with MAVS at the outer mitochondria membrane and thereby recruiting NF-kappa-B essential modulator IKBKG/NEMO to the MAVS signalosome, leading to the activation of both the IFN regulatory factor 3/IRF3 and NF-kappa-B pathways. Positively regulates the CGAS-induced type I interferon signaling pathway by stabilizing CGAS and inhibiting its autophagic degradation. Inhibits the transcriptional activity of SPI1 in a dose-dependent manner. Also inhibits OPTN-mediated selective autophagic degradation of KDM4D and thereby negatively regulates H3K9me2 and H3K9me3. Mechanistically, recruits USP14 to remove the 'Lys-63'-linked ubiquitination of KDM4D, preventing its recognition by OPTN and subsequent degradation. Functionally, plays an essential role in the innate immune defense against viruses and bacteria. Facilitates the type I IFN response by interacting with MAVS at the outer mitochondria membrane and thereby recruiting NF-kappa-B essential modulator IKBKG/NEMO to the MAVS signalosome, leading to the activation of both the IFN regulatory factor 3/IRF3 and NF-kappa-B pathways. Positively regulates the CGAS-induced type I interferon signaling pathway by stabilizing CGAS and inhibiting its autophagic degradation. Acts as a scaffold between TBK1 and STAT3 to promote phosphorylation of STAT3 and resolve interferon-stimulated gene (ISG) expression. Inhibits the transcriptional activity of SPI1 in a dose-dependent manner. The chain is Tripartite motif-containing protein 14 (Trim14) from Mus musculus (Mouse).